Reading from the N-terminus, the 445-residue chain is Cyclic GMP-AMP phosphodiesterase SMPDL3A (445 aa).

A signal peptide spans 1–22 (MALPGNFLCCLLVAWLCDPGLG). Residues Asp-42 and His-44 each contribute to the Zn(2+) site. Cys-59 and Cys-78 are joined by a disulfide. An N-linked (GlcNAc...) asparagine glycan is attached at Asn-66. Position 107 (Asp-107) interacts with Zn(2+). His-111 lines the ATP pocket. Asn-128 is a glycosylation site (N-linked (GlcNAc...) asparagine). Asn-148 contributes to the Zn(2+) binding site. The ATP site is built by Asn-148 and His-149. Residues Asn-219 and Asn-235 are each glycosylated (N-linked (GlcNAc...) asparagine). The Zn(2+) site is built by His-249, His-290, and His-292. 2 N-linked (GlcNAc...) asparagine glycosylation sites follow: Asn-353 and Asn-364. 2 cysteine pairs are disulfide-bonded: Cys-417/Cys-421 and Cys-427/Cys-440.

The protein belongs to the acid sphingomyelinase family. As to quaternary structure, monomer. Homodimer; homodimerizes following 2',3'-cGAMP-binding. Requires Zn(2+) as cofactor.

The protein resides in the secreted. It catalyses the reaction 2',3'-cGAMP + H2O = 5'-pGpA(2'-5') + H(+). It carries out the reaction 5'-pGpA(2'-5') + H2O = 5'-GpA(2'-5') + phosphate. The enzyme catalyses a ribonucleoside 5'-triphosphate + H2O = a ribonucleoside 5'-diphosphate + phosphate + H(+). The catalysed reaction is ATP + H2O = ADP + phosphate + H(+). Its function is as follows. Cyclic-nucleotide phosphodiesterase that acts as a negative regulator of innate immunity by mediating degradation of 2',3'-cGAMP, thereby inhibiting the cGAS-STING signaling. Specifically linearizes 2',3'-cGAMP into 2'5'-bond pGpA and further hydrolyzes pGpA to produce GpA. Also has in vitro nucleotide phosphodiesterase activity with nucleoside triphosphates, such as ATP. Has in vitro activity with p-nitrophenyl-TMP. Has lower activity with nucleoside diphosphates, and no activity with nucleoside monophosphates. Has in vitro activity with CDP-choline, giving rise to CMP and phosphocholine. Has in vitro activity with CDP-ethanolamine. Does not have sphingomyelin phosphodiesterase activity. This Rattus norvegicus (Rat) protein is Cyclic GMP-AMP phosphodiesterase SMPDL3A (Smpdl3a).